Consider the following 486-residue polypeptide: Sensor protein PhoQ (486 aa).

Residues 1 to 16 (MKKLLRLFFPLSLRVR) are Cytoplasmic-facing. A helical transmembrane segment spans residues 17-37 (FLLATAAVVLVLSLAYGMVAL). The Periplasmic segment spans residues 38–194 (IGYSVSFDKT…LKSSYMVWSW (157 aa)). Asp-151 and Asp-152 together coordinate a divalent metal cation. A helical membrane pass occupies residues 195–215 (FIYVLSANLLLVIPLLWVAAW). One can recognise an HAMP domain in the interval 215-266 (WWSLRPIEALAKEVRELEEHNRELLNPATTRELTSLVRNLNRLLKSERERYD). The Cytoplasmic portion of the chain corresponds to 216–486 (WSLRPIEALA…GRQHSAPKDE (271 aa)). The Histidine kinase domain occupies 274 to 480 (DLTHSLKTPL…RMEVIFGRQH (207 aa)). His-277 bears the Phosphohistidine; by autocatalysis mark. Asn-385 contacts Mg(2+). Residues 385-393 (NVLDNACKY), 415-420 (DDGPGI), and 434-446 (RVDT…GVGL) contribute to the ATP site. Residue Gln-442 coordinates Mg(2+).

In terms of assembly, homodimer; probably dimerizes via the cytoplasmic domain. Probably interacts with MgrB in the periplasm, altering its activity and that of downstream effector PhoP.

The protein localises to the cell inner membrane. The catalysed reaction is ATP + protein L-histidine = ADP + protein N-phospho-L-histidine.. Acetyl-CoA acts as a non-competitive inhibitor of the PhoQ autokinase activity. Feedback inhibited by MgrB, which seems to bind PhoQ, altering its activity and that of downstream effector PhoP. Its function is as follows. Member of the two-component regulatory system PhoP/PhoQ involved in adaptation to low Mg(2+) environments and the control of acid resistance genes. In low periplasmic Mg(2+), PhoQ functions as a membrane-associated protein kinase that undergoes autophosphorylation and subsequently transfers the phosphate to PhoP, resulting in the expression of PhoP-activated genes (PAG) and repression of PhoP-repressed genes (PRG). In high periplasmic Mg(2+), acts as a protein phosphatase that dephosphorylates phospho-PhoP, resulting in the repression of PAG and may lead to expression of some PRG. PhoP-regulated transcription is redox-sensitive, being activated when the periplasm becomes more reducing (deletion of dsbA/dsbB, or treatment with dithiothreitol). MgrB acts between DsbA/DsbB and PhoP/PhoQ in this pathway; the 2 periplasmic Cys residues of MgrB are required for its action on PhoQ, which then acts on PhoP. Mediates magnesium influx to the cytosol by activation of mgtA. Promotes expression of the two-component regulatory system rstA/rstB and transcription of the hemL, mgrB, nagA, slyB, vboR and yrbL genes. This is Sensor protein PhoQ (phoQ) from Escherichia coli (strain K12).